The chain runs to 148 residues: Putative nickel-responsive regulator (148 aa).

Residues His77, His88, His90, and Cys96 each coordinate Ni(2+).

It belongs to the transcriptional regulatory CopG/NikR family. It depends on Ni(2+) as a cofactor.

In terms of biological role, transcriptional regulator. This Bradyrhizobium diazoefficiens (strain JCM 10833 / BCRC 13528 / IAM 13628 / NBRC 14792 / USDA 110) protein is Putative nickel-responsive regulator.